The following is a 1140-amino-acid chain: Protein FAM184A (1140 aa).

Coiled-coil stretches lie at residues 57–256 (ALNT…NKAQ), 296–800 (AILR…IEME), and 868–907 (RITDLQEELRHREHHISELDKEVQHLHENISALTKELEFK). Residues 1063–1128 (PNLSALESGG…EASPVASPDP (66 aa)) form a disordered region.

This sequence belongs to the FAM184 family.

It is found in the cytoplasm. It localises to the P-body. Its subcellular location is the cytoskeleton. The protein localises to the microtubule organizing center. The protein resides in the centrosome. It is found in the centriolar satellite. The protein is Protein FAM184A of Homo sapiens (Human).